We begin with the raw amino-acid sequence, 267 residues long: Glutamate 5-kinase (267 aa).

ATP is bound at residue Lys-14. Substrate contacts are provided by Ser-54, Asp-141, and Asn-157. Residues 177-178 and 219-225 contribute to the ATP site; these read SD and TGGMLSK.

It belongs to the glutamate 5-kinase family.

It is found in the cytoplasm. The catalysed reaction is L-glutamate + ATP = L-glutamyl 5-phosphate + ADP. Its pathway is amino-acid biosynthesis; L-proline biosynthesis; L-glutamate 5-semialdehyde from L-glutamate: step 1/2. Catalyzes the transfer of a phosphate group to glutamate to form L-glutamate 5-phosphate. The sequence is that of Glutamate 5-kinase from Streptococcus agalactiae serotype Ia (strain ATCC 27591 / A909 / CDC SS700).